Here is a 162-residue protein sequence, read N- to C-terminus: uncharacterized protein (162 aa).

Residues 1–23 (MAQLPLSPAPQRPETKTPGKPEA) form a disordered region. The segment covering 13–23 (PETKTPGKPEA) has biased composition (basic and acidic residues).

This is an uncharacterized protein from Rhodobacter capsulatus (Rhodopseudomonas capsulata).